Consider the following 1150-residue polypeptide: Solute carrier family 12 member 6 (1150 aa).

Over 1–135 the chain is Cytoplasmic; sequence MHPPETTTKM…DEYFDKNLAL (135 aa). Positions 20–66 are disordered; that stretch reads TKIDDIPGLSDTSPDLSSRSSSRVRFSSRESVPETSRSEPMSEMSGA. The segment covering 28-45 has biased composition (low complexity); sequence LSDTSPDLSSRSSSRVRF. Phosphoserine is present on residues serine 32 and serine 120. The discontinuously helical transmembrane segment at 136-158 threads the bilayer; sequence FEEEMDTRPKVSSLLNRMANYTN. Serine 147 and serine 148 together coordinate K(+). Position 148 is a phosphoserine (serine 148). Asparagine 151 serves as a coordination point for chloride. Topologically, residues 159–165 are extracellular; it reads LTQGAKE. The segment at 161-181 is disordered; sequence QGAKEHEEAENITEGKKKPTK. A compositionally biased stretch (basic and acidic residues) spans 163–177; that stretch reads AKEHEEAENITEGKK. A helical membrane pass occupies residues 166 to 188; sequence HEEAENITEGKKKPTKTPQMGTF. Residues 189–211 lie on the Cytoplasmic side of the membrane; sequence MGVYLPCLQNIFGVILFLRLTWV. The chain crosses the membrane as a helical span at residues 212 to 245; the sequence is VGTAGVLQAFAIVLICCCCTMLTAISMSAIATNG. Residues 246–263 are Extracellular-facing; that stretch reads VVPAGGSYFMISRALGPE. The next 2 helical transmembrane spans lie at 264–287 and 288–316; these read FGGA…ILGA and IEIF…AMLN. Topologically, residues 317–433 are extracellular; that stretch reads NMRVYGTAFL…FVHNNVTSIQ (117 aa). Cysteine 375 and cysteine 390 form a disulfide bridge. Asparagine 379, asparagine 398, asparagine 411, and asparagine 428 each carry an N-linked (GlcNAc...) asparagine glycan. A disulfide bridge links cysteine 410 with cysteine 420. A helical membrane pass occupies residues 434-454; sequence GIPGLASGIITENLWSNYLPK. K(+) is bound by residues isoleucine 443, threonine 444, and asparagine 446. Chloride contacts are provided by isoleucine 443 and threonine 444. Positions 447 and 448 each coordinate chloride. Topologically, residues 455 to 464 are cytoplasmic; sequence GEIIEKPSAK. A helical transmembrane segment spans residues 465–487; that stretch reads SSDVLGSLNHEYVLVDITTSFTL. Residues 488 to 518 are Extracellular-facing; it reads LVGIFFPSVTGIMAGSNRSGDLKDAQKSIPI. Residues 519 to 545 form a helical membrane-spanning segment; the sequence is GTILAILTTSFVYLSNVVLFGACIEGV. The Cytoplasmic segment spans residues 546–568; sequence VLRDKFGDAVKGNLVVGTLSWPS. Transmembrane regions (helical) follow at residues 569–589 and 590–612; these read PWVI…QSLT and GAPR…VFGH. Isoleucine 603 contributes to the chloride binding site. Residues 613 to 629 lie on the Cytoplasmic side of the membrane; the sequence is SKANGEPTWALLLTAAI. Helical transmembrane passes span 630–649 and 650–665; these read AELG…LSMF and FLMC…ALQT. The Cytoplasmic segment spans residues 666 to 1150; it reads LLRTPNWRPR…GGSEVITIYS (485 aa). The scissor helix stretch occupies residues 682–691; the sequence is ALSFMGMSIC. A Phosphoserine modification is found at serine 736. Phosphothreonine is present on threonine 778. The residue at position 981 (serine 981) is a Phosphoserine. Phosphothreonine; by OXSR1 and STK39 is present on threonine 991. A phosphoserine mark is found at serine 1023, serine 1029, and serine 1032. Position 1048 is a phosphothreonine; by OXSR1 and STK39 (threonine 1048). The residue at position 1121 (tyrosine 1121) is a Phosphotyrosine. Positions 1133–1150 are interaction with CKB; it reads ERVLLVRGGGSEVITIYS.

The protein belongs to the SLC12A transporter family. K/Cl co-transporter subfamily. As to quaternary structure, homodimer; adopts a domain-swap conformation at the scissor helices connecting the transmembrane domain and C-terminal domain. Heterodimer with K-Cl cotransporter SLC12A5. Interacts (via C-terminus) with CKB; the interaction may be required for potassium-chloride cotransport activity. Phosphorylated, phosphorylation regulates transporter activity. Phosphorylated at Thr-991 and Thr-1048 by OXSR1/OSR1 and STK39/SPAK downstream of WNK kinases (WNK1, WNK2, WNK3 or WNK4), inhibiting the potassium-chloride cotransport activity. In terms of processing, N-glycosylated. In terms of tissue distribution, expressed in brain (at protein level). Highly expressed in heart, brain and kidney. Detected at lower levels in skeletal muscle, placenta, lung and pancreas. Detected in umbilical vein endothelial cells. As to expression, more abundant in kidney. Testis specific.

It localises to the cell membrane. The protein resides in the basolateral cell membrane. It catalyses the reaction K(+)(in) + chloride(in) = K(+)(out) + chloride(out). Inhibited following phosphorylation by OXSR1/OSR1 and STK39/SPAK: phosphorylation takes place downstream of WNK kinases (WNK1, WNK2, WNK3 or WNK4) in response to hyperosmotic stress and subsequent cell shrinkage. Activated by N-ethylmaleimide (NEM). Inhibited by DIOA, bumetanide and furosemide. Mediates electroneutral potassium-chloride cotransport when activated by cell swelling. May contribute to cell volume homeostasis in single cells. In terms of biological role, mediates electroneutral potassium-chloride cotransport when activated by cell swelling. May contribute to cell volume homeostasis in single cells. Its function is as follows. Mediates electroneutral potassium-chloride cotransport when activated by cell swelling. May contribute to cell volume homeostasis in single cells. The protein is Solute carrier family 12 member 6 of Homo sapiens (Human).